The primary structure comprises 421 residues: UDP-N-acetylglucosamine 1-carboxyvinyltransferase 2 (421 aa).

22 to 23 contributes to the phosphoenolpyruvate binding site; sequence KN. Arg94 lines the UDP-N-acetyl-alpha-D-glucosamine pocket. The Proton donor role is filled by Cys118. Cys118 carries the 2-(S-cysteinyl)pyruvic acid O-phosphothioketal modification. UDP-N-acetyl-alpha-D-glucosamine is bound by residues Asp308 and Ile330.

The protein belongs to the EPSP synthase family. MurA subfamily.

Its subcellular location is the cytoplasm. It catalyses the reaction phosphoenolpyruvate + UDP-N-acetyl-alpha-D-glucosamine = UDP-N-acetyl-3-O-(1-carboxyvinyl)-alpha-D-glucosamine + phosphate. The protein operates within cell wall biogenesis; peptidoglycan biosynthesis. In terms of biological role, cell wall formation. Adds enolpyruvyl to UDP-N-acetylglucosamine. The chain is UDP-N-acetylglucosamine 1-carboxyvinyltransferase 2 from Lactococcus lactis subsp. lactis (strain IL1403) (Streptococcus lactis).